Reading from the N-terminus, the 605-residue chain is MSRFRRGGKAPDPLSGFRAPKEQEPAVPHGLIKAARKSGQLNLSARGLTDVPVSVWRINVDTPPEAHQNVDFGGSDRWWEQTDLTKLILASNKLQLLSEDISLLPALVVLDIHDNQIVSLPCAIKELTNLQKLNISHNKIKQLPKELQHLQNLKSLLLQHNQLEELPDSIGHLSILEELDVSNNCLRSISSSVGQLTGLVKFNLSSNKLTALPTEIGKMKNLKQLDCTSNLLENVPASVAGMESLEQLYLRQNKLTYLPELPFLTKLKELHVGNNQIQTLGPEHLQNLSSLSVLELRYNKLKVLPEEISLLNGLERLDLSNNDLGSLPCTLGSLPNLKSLQLEGNPLRGIRRDILNKGTQELLKYLKGRVQVPDVKTQEDENSTATAMTLPSESVVNTHAIVTLKTLEYCEKQASLIPEAVFNATGSSFITTVNFSKNQLTEVPARIVEMKDSVCDVNLGFNKISSISLNLCMLLKLTHIDMRNNVLTSLPSEMEAMTRLQSVILSFNRFKHFPDVLYRIPTLETILISSNQIGSIDPTQLIKMTKLSTLDLQNNDLLQIPPALGNCESLRALHLEGNPFRNPRAAILAKGTVAVLEYLRSRIPT.

The segment at 1-26 is disordered; sequence MSRFRRGGKAPDPLSGFRAPKEQEPA. LRR repeat units lie at residues 83–104, 106–127, 129–151, 152–173, 175–196, 198–219, 221–242, 244–265, 266–287, 290–311, 313–335, 336–357, 429–450, 453–475, 476–497, 499–520, 522–543, 546–567, and 569–590; these read DLTK…ISLL, ALVV…IKEL, NLQK…QHLQ, NLKS…IGHL, ILEE…VGQL, GLVK…IGKM, NLKQ…VAGM, SLEQ…PFLT, KLKE…HLQN, SLSV…ISLL, GLER…GSLP, NLKS…ILNK, FITT…IVEM, SVCD…CMLL, KLTH…MEAM, RLQS…LYRI, TLET…QLIK, KLST…LGNC, and SLRA…ILAK.

In Xenopus tropicalis (Western clawed frog), this protein is Leucine-rich repeat-containing protein 40 (lrrc40).